Here is an 867-residue protein sequence, read N- to C-terminus: Leucine--tRNA ligase (867 aa).

A 'HIGH' region motif is present at residues 42-52 (PYPSGNLHMGH). The 'KMSKS' region motif lies at 625 to 629 (KMSKS). Lys-628 serves as a coordination point for ATP.

Belongs to the class-I aminoacyl-tRNA synthetase family.

The protein resides in the cytoplasm. The catalysed reaction is tRNA(Leu) + L-leucine + ATP = L-leucyl-tRNA(Leu) + AMP + diphosphate. The sequence is that of Leucine--tRNA ligase from Blochmanniella floridana.